We begin with the raw amino-acid sequence, 386 residues long: MLLDRLKADLAELDTRALRRTRRSLATPCAPHARVDGRDMLAFCSNDYLGLAANPALTRALQTGAVHWGAGCGASHLVSGHYAVHDELEARLAAFVDCERALYFSTGYMANTGTIPALVGRGDAIFADRLNHASLVDGALLSRAELHRYAHGDPAALERALAASSARRKLIVTDAVFSMDGDVAPLATLLELAERFDAWLMVDDAHGFGVLGPGGRGAVAEAGLASWRLIYVGTLGKAAGVSGAFVAGHADVVEWLMQKARTYIFTTGAPPALAETLLASLELIERGDERREHLVGLVALLRRELTLARWQLLPSRTPIQPVLIGDNAEALAVARALWDEGLWVPAIRPPTVPHGTARLRISLTAAHCADDVRRLAQALNRLEAQR.

R20 is a binding site for substrate. 107-108 is a pyridoxal 5'-phosphate binding site; sequence GY. H132 lines the substrate pocket. Residues S178, H206, and T234 each contribute to the pyridoxal 5'-phosphate site. Position 237 is an N6-(pyridoxal phosphate)lysine (K237). Residue T351 coordinates substrate.

The protein belongs to the class-II pyridoxal-phosphate-dependent aminotransferase family. BioF subfamily. As to quaternary structure, homodimer. Pyridoxal 5'-phosphate serves as cofactor.

It carries out the reaction 6-carboxyhexanoyl-[ACP] + L-alanine + H(+) = (8S)-8-amino-7-oxononanoate + holo-[ACP] + CO2. It functions in the pathway cofactor biosynthesis; biotin biosynthesis. Catalyzes the decarboxylative condensation of pimeloyl-[acyl-carrier protein] and L-alanine to produce 8-amino-7-oxononanoate (AON), [acyl-carrier protein], and carbon dioxide. The polypeptide is 8-amino-7-oxononanoate synthase (Aromatoleum aromaticum (strain DSM 19018 / LMG 30748 / EbN1) (Azoarcus sp. (strain EbN1))).